The primary structure comprises 112 residues: Large ribosomal subunit protein uL22 (112 aa).

Belongs to the universal ribosomal protein uL22 family. As to quaternary structure, part of the 50S ribosomal subunit.

In terms of biological role, this protein binds specifically to 23S rRNA; its binding is stimulated by other ribosomal proteins, e.g. L4, L17, and L20. It is important during the early stages of 50S assembly. It makes multiple contacts with different domains of the 23S rRNA in the assembled 50S subunit and ribosome. Functionally, the globular domain of the protein is located near the polypeptide exit tunnel on the outside of the subunit, while an extended beta-hairpin is found that lines the wall of the exit tunnel in the center of the 70S ribosome. In Caldanaerobacter subterraneus subsp. tengcongensis (strain DSM 15242 / JCM 11007 / NBRC 100824 / MB4) (Thermoanaerobacter tengcongensis), this protein is Large ribosomal subunit protein uL22.